Consider the following 118-residue polypeptide: Cell division protein SepF (118 aa).

The segment at 1–12 is important for localization in a ring-like structure at midcell; that stretch reads MGIMSKILGGGG.

In terms of assembly, homodimer. Does not oligomerize. Interacts with FtsZ2.

It is found in the cytoplasm. Its function is as follows. Involved in cell division. Probably acts as a membrane anchor for FstZ2, tethering its filaments to the division site. May be involved in septum closure. This Haloferax volcanii (strain ATCC 29605 / DSM 3757 / JCM 8879 / NBRC 14742 / NCIMB 2012 / VKM B-1768 / DS2) (Halobacterium volcanii) protein is Cell division protein SepF.